The primary structure comprises 177 residues: Large ribosomal subunit protein uL6 (177 aa).

The protein belongs to the universal ribosomal protein uL6 family. Part of the 50S ribosomal subunit.

This protein binds to the 23S rRNA, and is important in its secondary structure. It is located near the subunit interface in the base of the L7/L12 stalk, and near the tRNA binding site of the peptidyltransferase center. This Rickettsia canadensis (strain McKiel) protein is Large ribosomal subunit protein uL6.